A 264-amino-acid chain; its full sequence is uncharacterized protein (264 aa).

An N-terminal signal peptide occupies residues M1–G22. Residue C23 is the site of N-palmitoyl cysteine attachment. The S-diacylglycerol cysteine moiety is linked to residue C23.

Belongs to the staphylococcal tandem lipoprotein family.

It localises to the cell membrane. This is an uncharacterized protein from Staphylococcus aureus (strain N315).